Consider the following 121-residue polypeptide: Mu-hexatoxin-Mg1a (121 aa).

An N-terminal signal peptide occupies residues 1-20; sequence MMTLSPFLLLLIAAVVIGNA. The propeptide occupies 21–80; the sequence is SEGEVKNEFEERLKDEFKDPSRSEVAEVILLRELEVLEETLFGKEMTSDTEENRNSREKR. Intrachain disulfides connect cysteine 81-cysteine 95, cysteine 88-cysteine 102, and cysteine 94-cysteine 116. Lysine 120 is modified (lysine amide).

It belongs to the neurotoxin 14 (magi-1) family. 09 (magi-1) subfamily. Expressed by the venom gland.

Its subcellular location is the secreted. Functionally, insecticidal neurotoxin. Shows competition for site 3 of insect voltage-gated sodium channels (Nav). Induces flaccid paralysis when injected into lepidopteran larvae. Is not toxic to mice when injected intracranially at 20 pmol/g. The sequence is that of Mu-hexatoxin-Mg1a from Macrothele gigas (Japanese funnel web spider).